The sequence spans 423 residues: Osteomodulin (423 aa).

Residues 1 to 20 form the signal peptide; that stretch reads MGCLRPIYVLFFCFVVRVYG. A sulfotyrosine mark is found at tyrosine 22, tyrosine 25, tyrosine 31, tyrosine 39, tyrosine 51, and tyrosine 77. The region spanning 53-91 is the LRRNT domain; it reads APFYQNILGCAKECFCPTNFPTSMYCDNRKLKTIPDIPM. 11 LRR repeats span residues 92–113, 116–129, 142–164, 165–184, 187–207, 213–233, 234–255, 258–279, 281–294, 301–322, and 331–353; these read HIQQ…SFIN, HLKE…KIKS, NLQQ…PKSL, ERLL…AMDG, NVTM…KGKI, KLMQ…GLPL, SLMY…YFQK, KLHA…IFNL, NLIE…KLKQ, NLEH…MMCP, and HLTY…IFFC. Asparagine 113 and asparagine 121 each carry an N-linked (GlcNAc...) asparagine glycan. A glycan (N-linked (GlcNAc...) asparagine) is linked at asparagine 187. 2 N-linked (GlcNAc...) asparagine glycosylation sites follow: asparagine 242 and asparagine 278. The N-linked (GlcNAc...) asparagine glycan is linked to asparagine 316. Cysteine 321 and cysteine 353 are oxidised to a cystine. Residues 383–408 are disordered; it reads YQDEEEEEEDDSQDHTLEGQEETEEH. Residues 385 to 394 are compositionally biased toward acidic residues; it reads DEEEEEEDDS. Sulfotyrosine occurs at positions 413 and 414.

It belongs to the small leucine-rich proteoglycan (SLRP) family. SLRP class II subfamily. In terms of assembly, binds the alpha(V)beta(3)-integrin. In terms of processing, glycosylated; contains keratan sulfate. In terms of tissue distribution, osteoblast and odontoblast. Expressed in femoral bone and calvaria tissues. Detected in femoral head, rib, tendon and bone marrow.

Its subcellular location is the secreted. It is found in the extracellular space. It localises to the extracellular matrix. In terms of biological role, may be implicated in biomineralization processes. Has a function in binding of osteoblasts via the alpha(V)beta(3)-integrin. The sequence is that of Osteomodulin (Omd) from Rattus norvegicus (Rat).